The sequence spans 159 residues: Flagellar assembly factor FliW (159 aa).

Belongs to the FliW family. In terms of assembly, interacts with translational regulator CsrA and flagellin(s).

The protein localises to the cytoplasm. Functionally, acts as an anti-CsrA protein, binds CsrA and prevents it from repressing translation of its target genes, one of which is flagellin. Binds to flagellin and participates in the assembly of the flagellum. The protein is Flagellar assembly factor FliW of Geobacter sulfurreducens (strain ATCC 51573 / DSM 12127 / PCA).